The primary structure comprises 341 residues: tRNA N6-adenosine threonylcarbamoyltransferase (341 aa).

Fe cation is bound by residues histidine 111 and histidine 115. Substrate-binding positions include 134-138 (LVSGG), aspartate 167, glycine 180, and asparagine 276. Aspartate 304 provides a ligand contact to Fe cation.

This sequence belongs to the KAE1 / TsaD family. The cofactor is Fe(2+).

The protein resides in the cytoplasm. It catalyses the reaction L-threonylcarbamoyladenylate + adenosine(37) in tRNA = N(6)-L-threonylcarbamoyladenosine(37) in tRNA + AMP + H(+). Its function is as follows. Required for the formation of a threonylcarbamoyl group on adenosine at position 37 (t(6)A37) in tRNAs that read codons beginning with adenine. Is involved in the transfer of the threonylcarbamoyl moiety of threonylcarbamoyl-AMP (TC-AMP) to the N6 group of A37, together with TsaE and TsaB. TsaD likely plays a direct catalytic role in this reaction. In Azotobacter vinelandii (strain DJ / ATCC BAA-1303), this protein is tRNA N6-adenosine threonylcarbamoyltransferase.